We begin with the raw amino-acid sequence, 338 residues long: Glycerol-3-phosphate dehydrogenase [NAD(P)+] (338 aa).

Ser-13, Trp-14, and Lys-108 together coordinate NADPH. Residues Lys-108, Gly-139, and Ser-141 each coordinate sn-glycerol 3-phosphate. Ala-143 lines the NADPH pocket. Sn-glycerol 3-phosphate contacts are provided by Lys-194, Asp-247, Ser-257, Arg-258, and Asn-259. Catalysis depends on Lys-194, which acts as the Proton acceptor. Position 258 (Arg-258) interacts with NADPH. The NADPH site is built by Val-282 and Glu-284.

It belongs to the NAD-dependent glycerol-3-phosphate dehydrogenase family.

Its subcellular location is the cytoplasm. It carries out the reaction sn-glycerol 3-phosphate + NAD(+) = dihydroxyacetone phosphate + NADH + H(+). It catalyses the reaction sn-glycerol 3-phosphate + NADP(+) = dihydroxyacetone phosphate + NADPH + H(+). It participates in membrane lipid metabolism; glycerophospholipid metabolism. Catalyzes the reduction of the glycolytic intermediate dihydroxyacetone phosphate (DHAP) to sn-glycerol 3-phosphate (G3P), the key precursor for phospholipid synthesis. The protein is Glycerol-3-phosphate dehydrogenase [NAD(P)+] of Streptococcus suis (strain 98HAH33).